Consider the following 238-residue polypeptide: Probable transcriptional regulatory protein SSU05_0402 (238 aa).

The protein belongs to the TACO1 family. YeeN subfamily.

The protein localises to the cytoplasm. The protein is Probable transcriptional regulatory protein SSU05_0402 of Streptococcus suis (strain 05ZYH33).